The sequence spans 466 residues: Trigger factor (466 aa).

Residues 162–243 (GDVVSIDLSA…VRSVKERELP (82 aa)) form the PPIase FKBP-type domain. The disordered stretch occupies residues 428 to 466 (GNTIDTSEFFGKRVSAGEAEEAEPADEGAARAASDEATT). Residues 457–466 (ARAASDEATT) are compositionally biased toward low complexity.

The protein belongs to the FKBP-type PPIase family. Tig subfamily.

The protein localises to the cytoplasm. The catalysed reaction is [protein]-peptidylproline (omega=180) = [protein]-peptidylproline (omega=0). In terms of biological role, involved in protein export. Acts as a chaperone by maintaining the newly synthesized protein in an open conformation. Functions as a peptidyl-prolyl cis-trans isomerase. The chain is Trigger factor from Mycobacterium tuberculosis (strain ATCC 25177 / H37Ra).